Here is a 434-residue protein sequence, read N- to C-terminus: RHOMBOID-like protein 9, chloroplastic (434 aa).

Residues 1-68 (MALFPLHHEV…SPRRRLCLVR (68 aa)) constitute a chloroplast transit peptide. 8 helical membrane passes run 182-202 (FYAV…EAAA), 209-229 (MGLL…ILAG), 238-258 (MFLH…LTFG), 267-287 (LFTF…MSFL), 289-309 (TADP…AWLV), 326-346 (LFQK…FGPI), 352-372 (LGAL…LQLG), and 399-419 (FLLF…IGDG).

The protein belongs to the peptidase S54 family.

The protein resides in the plastid. The protein localises to the chloroplast membrane. In terms of biological role, probable rhomboid-type serine protease that catalyzes intramembrane proteolysis. The sequence is that of RHOMBOID-like protein 9, chloroplastic from Arabidopsis thaliana (Mouse-ear cress).